Here is a 107-residue protein sequence, read N- to C-terminus: Probable antitoxin TacA (107 aa).

The protein belongs to the TacA antitoxin family. In terms of assembly, forms a complex with cognate antitoxin TacT.

In terms of biological role, probable antitoxin component of a type II toxin-antitoxin (TA) system. Should neutralize cognate toxin TacT (y4aS). The protein is Probable antitoxin TacA of Sinorhizobium fredii (strain NBRC 101917 / NGR234).